The sequence spans 246 residues: tRNA pseudouridine synthase A (246 aa).

The active-site Nucleophile is aspartate 53. Tyrosine 112 provides a ligand contact to substrate.

This sequence belongs to the tRNA pseudouridine synthase TruA family. In terms of assembly, homodimer.

The catalysed reaction is uridine(38/39/40) in tRNA = pseudouridine(38/39/40) in tRNA. In terms of biological role, formation of pseudouridine at positions 38, 39 and 40 in the anticodon stem and loop of transfer RNAs. This chain is tRNA pseudouridine synthase A, found in Anaplasma phagocytophilum (strain HZ).